An 817-amino-acid chain; its full sequence is Probable beta-glucosidase G (817 aa).

A signal peptide spans 1-20; sequence MASIAHLIFSGLLAATVANS. Residues N40, N58, N229, and N276 are each glycosylated (N-linked (GlcNAc...) asparagine). Residue D304 is part of the active site. Residues N343, N350, N402, N507, N563, N584, N623, N662, N679, and N715 are each glycosylated (N-linked (GlcNAc...) asparagine).

It belongs to the glycosyl hydrolase 3 family.

It localises to the secreted. It catalyses the reaction Hydrolysis of terminal, non-reducing beta-D-glucosyl residues with release of beta-D-glucose.. It functions in the pathway glycan metabolism; cellulose degradation. Functionally, beta-glucosidases are one of a number of cellulolytic enzymes involved in the degradation of cellulosic biomass. Catalyzes the last step releasing glucose from the inhibitory cellobiose. The protein is Probable beta-glucosidase G (bglG) of Neosartorya fischeri (strain ATCC 1020 / DSM 3700 / CBS 544.65 / FGSC A1164 / JCM 1740 / NRRL 181 / WB 181) (Aspergillus fischerianus).